A 150-amino-acid polypeptide reads, in one-letter code: 6,7-dimethyl-8-ribityllumazine synthase (150 aa).

Residues phenylalanine 11, 43–45 (VYD), and 67–69 (AVI) each bind 5-amino-6-(D-ribitylamino)uracil. (2S)-2-hydroxy-3-oxobutyl phosphate is bound at residue 72–73 (AT). Histidine 75 acts as the Proton donor in catalysis. Position 100 (leucine 100) interacts with 5-amino-6-(D-ribitylamino)uracil. Arginine 115 serves as a coordination point for (2S)-2-hydroxy-3-oxobutyl phosphate.

It belongs to the DMRL synthase family.

It carries out the reaction (2S)-2-hydroxy-3-oxobutyl phosphate + 5-amino-6-(D-ribitylamino)uracil = 6,7-dimethyl-8-(1-D-ribityl)lumazine + phosphate + 2 H2O + H(+). It functions in the pathway cofactor biosynthesis; riboflavin biosynthesis; riboflavin from 2-hydroxy-3-oxobutyl phosphate and 5-amino-6-(D-ribitylamino)uracil: step 1/2. Functionally, catalyzes the formation of 6,7-dimethyl-8-ribityllumazine by condensation of 5-amino-6-(D-ribitylamino)uracil with 3,4-dihydroxy-2-butanone 4-phosphate. This is the penultimate step in the biosynthesis of riboflavin. This is 6,7-dimethyl-8-ribityllumazine synthase from Pyrobaculum neutrophilum (strain DSM 2338 / JCM 9278 / NBRC 100436 / V24Sta) (Thermoproteus neutrophilus).